The sequence spans 204 residues: Transmembrane protein 186 (204 aa).

Topologically, residues 1-69 (MLELLCRVSP…RLVAALSRLK (69 aa)) are mitochondrial matrix. A helical membrane pass occupies residues 70–90 (VYQAVITAAGTPIVFALGSAG). Residues 91-95 (QLSTD) lie on the Mitochondrial intermembrane side of the membrane. Residues 96 to 116 (ALAIYAAIGVTGLITLTLASY) form a helical membrane-spanning segment. Residues 117-204 (ASSNLVGFIY…RQLFEGLFGN (88 aa)) are Mitochondrial matrix-facing.

This sequence belongs to the TMEM186 family. As to quaternary structure, associates with mitochondrial complex I assembly intermediates during its biogenesis.

The protein localises to the mitochondrion inner membrane. Its function is as follows. As part of the MCIA complex, required for efficient assembly of the mitochondrial complex I. The protein is Transmembrane protein 186 of Drosophila melanogaster (Fruit fly).